The following is a 535-amino-acid chain: Arginine-containing cyclodipeptide synthase anoA (535 aa).

Residues 93 to 114 (LLSPPREPGPIDSETKTREKKS) form a disordered region. Over residues 105–114 (SETKTREKKS) the composition is skewed to basic and acidic residues. The Conserved DDXXE motif signature appears at 424–428 (DDIAE).

This sequence belongs to the arginine-containing cyclodipeptide synthase family.

The enzyme catalyses L-tryptophyl-tRNA(Trp) + L-arginyl-tRNA(Arg) = cyclo(L-arginyl-L-tryptophyl) + tRNA(Trp) + tRNA(Arg) + H(+). It functions in the pathway secondary metabolite biosynthesis. Arginine-containing cyclodipeptide synthase; part of the cluster that mediates the biosynthesis of a highly modified cyclo-arginine-tryptophan dipeptide (cRW). Within the pathway, AnoA acts as the scaffold-generating enzyme and is responsible for formation of the cyclo-Arg-Trp diketopiperazine (cRW) from L-arginyl-tRNA(Arg) + L-tryptophanyl-tRNA(Trp). Additional enzymes from the cluster then further modify the cyclo-Arg-Asp diketopiperazine (cRW) scaffold. This is Arginine-containing cyclodipeptide synthase anoA from Aspergillus nomiae (Aspergillus nomius).